The sequence spans 152 residues: Protein D1 (152 aa).

The protein belongs to the phosphatidylethanolamine-binding protein family.

The protein is Protein D1 (D1) of Onchocerca volvulus.